We begin with the raw amino-acid sequence, 881 residues long: Squamosa promoter-binding-like protein 1 (881 aa).

Residues phenylalanine 49 to lysine 69 form a disordered region. Low complexity predominate over residues asparagine 53–serine 62. The interval proline 96–asparagine 187 is sufficient and necessary for DNA binding. Residues glycine 103–threonine 180 form an SBP-type zinc finger. Residues cysteine 106, cysteine 111, cysteine 128, histidine 131, cysteine 147, cysteine 150, histidine 154, and cysteine 166 each coordinate Zn(2+). The Bipartite nuclear localization signal motif lies at lysine 163 to lysine 179. Over residues leucine 170–lysine 179 the composition is skewed to basic residues. Disordered stretches follow at residues leucine 170 to aspartate 193 and phenylalanine 274 to glutamine 358. Over residues serine 275–glutamate 284 the composition is skewed to polar residues. Residues asparagine 285–aspartate 295 are compositionally biased toward basic and acidic residues. The span at proline 319–threonine 338 shows a compositional bias: polar residues. Over residues serine 339–aspartate 356 the composition is skewed to low complexity.

Zn(2+) serves as cofactor.

The protein localises to the nucleus. In terms of biological role, trans-acting factor that binds specifically to the consensus nucleotide sequence 5'-TNCGTACAA-3' of AP1 promoter. Binds specifically to the 5'-GTAC-3' core sequence. The chain is Squamosa promoter-binding-like protein 1 (SPL1) from Arabidopsis thaliana (Mouse-ear cress).